The following is a 419-amino-acid chain: MVDAPHSKCGTFGFVGSSPTAPTFLLDTYKRLPLKIVKGNGCWLWDETGKKYLDAVAGIATCSLGHSDKKLSKVLSQQLRKIQHVSNLYRIPEQEDLAQWLVNQSCADSVFFCNSGAEANEAAIKLARKYGQIKRGIKRPIILSAKSSFHGRTLAALSATGQTKYQKGFEPLVEGFEFFSFNDSNSVQDLYENLEKDEPRVAAILIEPIQGEGGLNLGDQKFFYFLRDYCNKNNILLLFDEVQSGMGRTGKLWGYEHFNVEPDAFTLAKGLGGGHSIGALLVKENASIFEPGDHASTFGGNPFACKAGLTVAKEIQNRNLLENTYCRGNQLREGLQKLINNYPHHLEEVRGIGLMLGLAIKKNSNLTSQKIVELAIKEGLLVIGAGEKVIRMLPPLIITKREIETLLTRLNACFRKLNN.

Residues 116–117 and Phe149 each bind pyridoxal 5'-phosphate; that span reads GA. Residue Arg152 participates in N(2)-acetyl-L-ornithine binding. 240–243 is a pyridoxal 5'-phosphate binding site; the sequence is DEVQ. The residue at position 269 (Lys269) is an N6-(pyridoxal phosphate)lysine. Ser296 is a binding site for N(2)-acetyl-L-ornithine. Pyridoxal 5'-phosphate is bound at residue Thr297.

The protein belongs to the class-III pyridoxal-phosphate-dependent aminotransferase family. ArgD subfamily. As to quaternary structure, homodimer. It depends on pyridoxal 5'-phosphate as a cofactor.

It is found in the cytoplasm. It carries out the reaction N(2)-acetyl-L-ornithine + 2-oxoglutarate = N-acetyl-L-glutamate 5-semialdehyde + L-glutamate. It participates in amino-acid biosynthesis; L-arginine biosynthesis; N(2)-acetyl-L-ornithine from L-glutamate: step 4/4. The chain is Acetylornithine aminotransferase from Prochlorococcus marinus (strain SARG / CCMP1375 / SS120).